The primary structure comprises 142 residues: Hemoglobin F-I (142 aa).

Residues 2-142 (GLTTAQIKAI…AAGVLVAAMK (141 aa)) enclose the Globin domain. His-95 serves as a coordination point for heme b.

This sequence belongs to the globin family. Homotetramer.

In terms of biological role, hemoglobin F-I appears to function in storage, rather than transport of oxygen. The chain is Hemoglobin F-I from Urechis caupo (Innkeeper worm).